The following is a 369-amino-acid chain: D-alanine--D-alanine ligase (369 aa).

In terms of domain architecture, ATP-grasp spans Lys152–Glu359. Position 180–235 (Arg180–Glu235) interacts with ATP. Residues Asp314, Glu326, and Asn328 each contribute to the Mg(2+) site.

The protein belongs to the D-alanine--D-alanine ligase family. Mg(2+) serves as cofactor. The cofactor is Mn(2+).

It is found in the cytoplasm. The catalysed reaction is 2 D-alanine + ATP = D-alanyl-D-alanine + ADP + phosphate + H(+). It participates in cell wall biogenesis; peptidoglycan biosynthesis. Functionally, cell wall formation. This is D-alanine--D-alanine ligase from Mycolicibacterium paratuberculosis (strain ATCC BAA-968 / K-10) (Mycobacterium paratuberculosis).